The sequence spans 753 residues: MDFDTNEDLNGVRFAWNVFPSSKTDAMQNVVPLGCMYTPLKEIEGLNVVDYNPVVCAGPHCKAILNPYCMIDPRSNSWTCSICKSRNHLPTQYHNLSQENIPIELQQTTVEYLTTKPVQVPPIFLFVVDITTEPDNLQALKESITASLSLLPANALIGLITYGKVVQLHDFSNDTIARCNVFKGDKDYQLEPLVEMLTGQKMTGSIPNTQVTPFSLNRFFLPLEQIEFRFIQVLESLSQDEWSVKPGERPLRATGSALNIASLLLQGCYKNNAARIIVFSSGPDTINPGLIVDLELKNPIRSHHDIDSGNAVHYKKAMKYYNTLADRISENGHTVDLFSGCYDQIGMSEMRKLTDRTGGVLLLTDSFSTAIFKQSYLRLFAKDEDDYMKMSFSAKFQVKSSKELKVQGLIGHASAVKKTSATNISDTTIGIGGTSTWTMGSLLPQHTYAVFFDIASNGPTPVTGDNQQLAYIQFITNYQHSSGTIRTRVTTVANQLQSFGSPLIAASFDQEAAAVLISRIAVHKAETEEGPDVIKWIDRTLIKLCQKYADYNKNDPSSFRLAGNFSLFPQFMYYLRRSQFLSVFNNSPDETAFYRHIFTREDTTNSLIMIQPTLTSFSMESEPEPVLLDSLSVKADTILLLDTFFYILIYHGETIAQWRKAGYQDDPQYADFKELLEEPKLEAAELLVDRFPLPRFIDTEAGGSQARFLLSKLNPSDSYQNMNSAGATIVLTDDISLQNFMLHLQQSVVNTQK.

Zn(2+) is bound by residues cysteine 56, cysteine 61, cysteine 80, and cysteine 83.

This sequence belongs to the SEC23/SEC24 family. SEC23 subfamily. In terms of assembly, the COPII coat is composed of at least 5 proteins: the SEC23/24 complex, the SEC13/31 complex, and the protein SAR1.

The protein resides in the cytoplasm. Its subcellular location is the cytoplasmic vesicle. It localises to the COPII-coated vesicle membrane. The protein localises to the endoplasmic reticulum membrane. It is found in the golgi apparatus membrane. Component of the coat protein complex II (COPII) which promotes the formation of transport vesicles from the endoplasmic reticulum (ER). The coat has two main functions, the physical deformation of the endoplasmic reticulum membrane into vesicles and the selection of cargo molecules. In Candida glabrata (strain ATCC 2001 / BCRC 20586 / JCM 3761 / NBRC 0622 / NRRL Y-65 / CBS 138) (Yeast), this protein is Protein transport protein SEC23-1 (SEC231).